Here is a 112-residue protein sequence, read N- to C-terminus: Small ribosomal subunit protein eS24 (112 aa).

The segment at Arg-88–Ser-112 is disordered.

It belongs to the eukaryotic ribosomal protein eS24 family.

The protein is Small ribosomal subunit protein eS24 of Methanospirillum hungatei JF-1 (strain ATCC 27890 / DSM 864 / NBRC 100397 / JF-1).